The following is a 951-amino-acid chain: Leucine-rich repeat-containing G-protein coupled receptor 4 (951 aa).

The signal sequence occupies residues 1 to 19 (MPGPLGLLCFLALGLRGSA). The Extracellular portion of the chain corresponds to 20 to 544 (EPSGAAPPLC…LLGSWMIRLT (525 aa)). The LRRNT domain maps to 25–57 (APPLCAAPCSCDGDRRVDCSGKGLTAVPEGLSA). 2 disulfides stabilise this stretch: cysteine 29/cysteine 35 and cysteine 33/cysteine 43. LRR repeat units lie at residues 35–58 (CDGDRRVDCSGKGLTAVPEGLSAF), 59–79 (TQLLDISMNNITQLPEDAFKN), 81–103 (PFLEELRLAGNDLSFIHPKALSG), 104–127 (LKELKVLTLQNNQLKTVPSEAIRG), 128–151 (LSSLQSLRLDANHITSVPEDSFEG), 153–175 (TQLRHLWLDDNSLTEVPVHPLSN), 176–199 (LPTLQALTLALNKISSIPDFAFTN), 201–223 (SSLVVLHLHNNKIKSLGQHCFDG), 224–247 (LDNLETLDLNYNNLGEFPQAIKAL), 248–270 (PSLKELLFHSNSISVIPDGAFDG), and 272–294 (PLLKTIHLYDNPLSFVGNSAFHN). N-linked (GlcNAc...) asparagine glycosylation occurs at asparagine 68. Residue asparagine 199 is glycosylated (N-linked (GlcNAc...) asparagine). N-linked (GlcNAc...) asparagine glycosylation is found at asparagine 294 and asparagine 314. LRR repeat units follow at residues 318-341 (TVRLESLTLTGTKISSISNNLCQE), 342-363 (QKRLRTLDLSYNSIKDLPSFNG), 364-387 (CHALEEISLQRNQIHQIKEDTFQG), 388-411 (LTSLKILDLSRNLIHEIDDRAFAK), and 413-435 (GSITNLDVSFNELTSFPTEGLNG). An intrachain disulfide couples cysteine 339 to cysteine 364. 2 disulfide bridges follow: cysteine 470–cysteine 522 and cysteine 471–cysteine 476. The helical transmembrane segment at 545–565 (VWFIFLVALFFNLLVILTTFA) threads the bilayer. Residues 566–575 (SCTSVPSSKL) are Cytoplasmic-facing. Residues 576–596 (FIGLISVSNLFMGAYTGILTF) form a helical membrane-spanning segment. Residues 597 to 619 (LDAVSWGRFAEFGIWWEIGSGCK) are Extracellular-facing. Cysteines 618 and 693 form a disulfide. The chain crosses the membrane as a helical span at residues 620–640 (IAGFLAVFSSESAIFLLMLAA). The Cytoplasmic segment spans residues 641–661 (VERSLSAKDMMKNGKSNHLRQ). The chain crosses the membrane as a helical span at residues 662 to 682 (FRIAALLAFLGAAVAGSFPLF). Residues 683–703 (HRGEYSASPLCLPFPTGETPS) lie on the Extracellular side of the membrane. A helical transmembrane segment spans residues 704 to 724 (LGFTVTLVLLNSLAFLLMAII). Over 725–756 (YTKLYCNLEKEDLSESSQSSMIKHVAWLIFTN) the chain is Cytoplasmic. The helical transmembrane segment at 757-777 (CIFFCPVAFFSFAPLITAVSI) threads the bilayer. The Extracellular portion of the chain corresponds to 778 to 783 (SPEIMK). Residues 784–804 (SVTLIFFPLPACLNPVLYVFF) form a helical membrane-spanning segment. Over 805-951 (NPKFKEDWKL…YAYNLPRVKD (147 aa)) the chain is Cytoplasmic. At serine 920 the chain carries Phosphoserine.

Belongs to the G-protein coupled receptor 1 family.

It is found in the cell membrane. Receptor for R-spondins that potentiates the canonical Wnt signaling pathway and is involved in the formation of various organs. Upon binding to R-spondins (RSPO1, RSPO2, RSPO3 or RSPO4), associates with phosphorylated LRP6 and frizzled receptors that are activated by extracellular Wnt receptors, triggering the canonical Wnt signaling pathway to increase expression of target genes. In contrast to classical G-protein coupled receptors, does not activate heterotrimeric G-proteins to transduce the signal. Its function as activator of the Wnt signaling pathway is required for the development of various organs, including liver, kidney, intestine, bone, reproductive tract and eye. May also act as a receptor for norrin (NDP), such results however required additional confirmation in vivo. Required during spermatogenesis to activate the Wnt signaling pathway in peritubular myoid cells. Required for the maintenance of intestinal stem cells and Paneth cell differentiation in postnatal intestinal crypts. Acts as a regulator of bone formation and remodeling. Involved in kidney development; required for maintaining the ureteric bud in an undifferentiated state. Involved in the development of the anterior segment of the eye. Required during erythropoiesis. Also acts as a negative regulator of innate immunity by inhibiting TLR2/TLR4 associated pattern-recognition and pro-inflammatory cytokine production. Plays an important role in regulating the circadian rhythms of plasma lipids, partially through regulating the rhythmic expression of MTTP. Required for proper development of GnRH neurons (gonadotropin-releasing hormone expressing neurons) that control the release of reproductive hormones from the pituitary gland. The polypeptide is Leucine-rich repeat-containing G-protein coupled receptor 4 (LGR4) (Bos taurus (Bovine)).